The chain runs to 288 residues: Homoserine kinase (288 aa).

79-89 (PLARGLGSSSS) lines the ATP pocket.

The protein belongs to the GHMP kinase family. Homoserine kinase subfamily.

Its subcellular location is the cytoplasm. It catalyses the reaction L-homoserine + ATP = O-phospho-L-homoserine + ADP + H(+). The protein operates within amino-acid biosynthesis; L-threonine biosynthesis; L-threonine from L-aspartate: step 4/5. Functionally, catalyzes the ATP-dependent phosphorylation of L-homoserine to L-homoserine phosphate. The protein is Homoserine kinase of Streptococcus sanguinis (strain SK36).